The chain runs to 361 residues: Trans-2,3-enoyl-CoA reductase-like (361 aa).

A phosphoserine mark is found at S33 and S35. A run of 4 helical transmembrane segments spans residues 139-159 (VGWTTVFLAEYSGPLLIYLLF), 181-201 (VHLAFFCHCIHYIRLLLETLF), 215-235 (LIKGCAFYWGFTSWMAYYINH), and 309-329 (ISFTVMTQTLPVGIFTILMTI).

The protein belongs to the steroid 5-alpha reductase family. In terms of tissue distribution, expression is highest in the heart with very low to almost undetectable levels in brain, skeletal muscle, stomach, pancreas, liver, kidney, small intestine, and uterus.

The protein resides in the membrane. Its subcellular location is the endoplasmic reticulum. The polypeptide is Trans-2,3-enoyl-CoA reductase-like (Tecrl) (Mus musculus (Mouse)).